A 349-amino-acid polypeptide reads, in one-letter code: Phosphoribosylformylglycinamidine cyclo-ligase (349 aa).

This sequence belongs to the AIR synthase family.

The protein localises to the cytoplasm. It catalyses the reaction 2-formamido-N(1)-(5-O-phospho-beta-D-ribosyl)acetamidine + ATP = 5-amino-1-(5-phospho-beta-D-ribosyl)imidazole + ADP + phosphate + H(+). The protein operates within purine metabolism; IMP biosynthesis via de novo pathway; 5-amino-1-(5-phospho-D-ribosyl)imidazole from N(2)-formyl-N(1)-(5-phospho-D-ribosyl)glycinamide: step 2/2. In Trichlorobacter lovleyi (strain ATCC BAA-1151 / DSM 17278 / SZ) (Geobacter lovleyi), this protein is Phosphoribosylformylglycinamidine cyclo-ligase.